The sequence spans 363 residues: Uroporphyrinogen decarboxylase (363 aa).

Substrate-binding positions include 36–40 (RQAGR), aspartate 85, tyrosine 160, serine 215, and histidine 339.

It belongs to the uroporphyrinogen decarboxylase family. Homodimer.

It localises to the cytoplasm. It catalyses the reaction uroporphyrinogen III + 4 H(+) = coproporphyrinogen III + 4 CO2. It participates in porphyrin-containing compound metabolism; protoporphyrin-IX biosynthesis; coproporphyrinogen-III from 5-aminolevulinate: step 4/4. Functionally, catalyzes the decarboxylation of four acetate groups of uroporphyrinogen-III to yield coproporphyrinogen-III. This Saccharopolyspora erythraea (strain ATCC 11635 / DSM 40517 / JCM 4748 / NBRC 13426 / NCIMB 8594 / NRRL 2338) protein is Uroporphyrinogen decarboxylase.